Reading from the N-terminus, the 548-residue chain is Non-structural protein NS1 (548 aa).

The protein belongs to the orbivirus non-structural protein NS1 family.

The protein is Non-structural protein NS1 (Segment-5) of African horse sickness virus (AHSV).